Here is a 110-residue protein sequence, read N- to C-terminus: Phosphoribosyl-ATP pyrophosphatase (110 aa).

It belongs to the PRA-PH family.

It is found in the cytoplasm. The catalysed reaction is 1-(5-phospho-beta-D-ribosyl)-ATP + H2O = 1-(5-phospho-beta-D-ribosyl)-5'-AMP + diphosphate + H(+). The protein operates within amino-acid biosynthesis; L-histidine biosynthesis; L-histidine from 5-phospho-alpha-D-ribose 1-diphosphate: step 2/9. The protein is Phosphoribosyl-ATP pyrophosphatase (hisE) of Clostridium acetobutylicum (strain ATCC 824 / DSM 792 / JCM 1419 / IAM 19013 / LMG 5710 / NBRC 13948 / NRRL B-527 / VKM B-1787 / 2291 / W).